The sequence spans 357 residues: MEENKQRVKSIINILQLVAPGTPLREGIDNVLRAQTGGLIVLGYNEQIKSIVDGGFHINCAFSPASLYELAKMDGALILNETGSKILIANAQLVPDSSIDSIETGMRHRTAERVAKQTGSLVVAISQRRNVITLYQGNLRYTLKDIGVILTKANQAIQTLEKYKAVWNDGITNLGILEFEEVVTMSEVVHVLHSVEMVLRIKNEILSYIHELGTEGRLIRLQLTELLADLEAEAALLIKDYHQEKTQDHHQILKKLQDLANTQLLEDSDLVKLLGYPGQTSLEESVTPRGYRITSKISRVPPLIIENLINRFKTLQGVCRATINELDDVEGIGEVRAKKIREGLKRIQEHLYMSRHN.

The DAC domain maps to 8 to 146; the sequence is VKSIINILQL…GNLRYTLKDI (139 aa). Residues G75, L93, and 106-110 contribute to the ATP site; that span reads MRHRT.

The protein belongs to the DisA family. Homooctamer. It depends on Mg(2+) as a cofactor.

The enzyme catalyses 2 ATP = 3',3'-c-di-AMP + 2 diphosphate. Its function is as follows. Participates in a DNA-damage check-point that is active prior to asymmetric division when DNA is damaged. DisA forms globular foci that rapidly scan along the chromosomes during sporulation, searching for lesions. When a lesion is present, DisA pauses at the lesion site. This triggers a cellular response that culminates in a temporary block in sporulation initiation. Functionally, also has diadenylate cyclase activity, catalyzing the condensation of 2 ATP molecules into cyclic di-AMP (c-di-AMP). c-di-AMP acts as a signaling molecule that couples DNA integrity with progression of sporulation. The rise in c-di-AMP level generated by DisA while scanning the chromosome, operates as a positive signal that advances sporulation; upon encountering a lesion, the DisA focus arrests at the damaged site and halts c-di-AMP synthesis. In Bacillus cereus (strain B4264), this protein is DNA integrity scanning protein DisA.